Consider the following 212-residue polypeptide: 3-isopropylmalate dehydratase small subunit (212 aa).

Belongs to the LeuD family. LeuD type 1 subfamily. In terms of assembly, heterodimer of LeuC and LeuD.

The catalysed reaction is (2R,3S)-3-isopropylmalate = (2S)-2-isopropylmalate. It functions in the pathway amino-acid biosynthesis; L-leucine biosynthesis; L-leucine from 3-methyl-2-oxobutanoate: step 2/4. Its function is as follows. Catalyzes the isomerization between 2-isopropylmalate and 3-isopropylmalate, via the formation of 2-isopropylmaleate. The protein is 3-isopropylmalate dehydratase small subunit of Beutenbergia cavernae (strain ATCC BAA-8 / DSM 12333 / CCUG 43141 / JCM 11478 / NBRC 16432 / NCIMB 13614 / HKI 0122).